The following is a 327-amino-acid chain: Beta-1,4-galactosyltransferase 7 (327 aa).

Over 1–30 the chain is Cytoplasmic; the sequence is MLPSRRKAAQLPWEDGRARLLPGGLRRKCS. A helical; Signal-anchor for type II membrane protein transmembrane segment spans residues 31–51; sequence IFHLFIAFLLLVFFSLLWLQL. The Lumenal portion of the chain corresponds to 52-327; that stretch reads SCSGDMAQVT…KTATPWCIFG (276 aa). The interval 61-88 is disordered; it reads TRGQGQETSGPPRACPPEPPPEHWEEDE. UDP-alpha-D-galactose is bound by residues 100–104 and 139–141; these read PFRER and FNR. A glycan (N-linked (GlcNAc...) asparagine) is linked at N154. Residues 164–165, Y194, and W224 contribute to the UDP-alpha-D-galactose site; that span reads VD. Residue D165 coordinates Mn(2+). 226–229 contacts N-acetyl-D-glucosamine; sequence REDD. Mn(2+) is bound at residue H257. UDP-alpha-D-galactose contacts are provided by residues 257-259 and R266; that span reads HLH.

This sequence belongs to the glycosyltransferase 7 family. Mn(2+) is required as a cofactor.

The protein localises to the golgi apparatus. The protein resides in the golgi stack membrane. The catalysed reaction is 3-O-(beta-D-xylosyl)-L-seryl-[protein] + UDP-alpha-D-galactose = 3-O-(beta-D-galactosyl-(1-&gt;4)-beta-D-xylosyl)-L-seryl-[protein] + UDP + H(+). It functions in the pathway protein modification; protein glycosylation. Its function is as follows. Required for the biosynthesis of the tetrasaccharide linkage region of proteoglycans, especially for small proteoglycans in skin fibroblasts. This is Beta-1,4-galactosyltransferase 7 (B4galt7) from Mus musculus (Mouse).